Reading from the N-terminus, the 220-residue chain is MKKIQIAIDGPASSGKSTVAKIIARNLGLIYLDTGAMYRVATLVALQEKTEDASKIIQFIENHPISFANGKNGQEVLVGLDNVTEVIRTNEVTNAVSKISAMMEIREFMVAEQQRIAQKGGIIMDGRDIGTVVLPQANLKIFLVASVDERAERRYKENLSKGIPTDLDRLKVEIAERDRKDSTRAVSPLKQAEDAILLDSTGKTIKEIVQFIEEKAKKLM.

10 to 18 provides a ligand contact to ATP; it reads GPASSGKST.

It belongs to the cytidylate kinase family. Type 1 subfamily.

The protein localises to the cytoplasm. It catalyses the reaction CMP + ATP = CDP + ADP. It carries out the reaction dCMP + ATP = dCDP + ADP. In Lactococcus lactis subsp. cremoris (strain MG1363), this protein is Cytidylate kinase.